Reading from the N-terminus, the 271-residue chain is Glutamate racemase 3 (271 aa).

Residues aspartate 15–serine 16 and tyrosine 47–glycine 48 each bind substrate. The Proton donor/acceptor role is filled by cysteine 78. Asparagine 79–threonine 80 provides a ligand contact to substrate. Catalysis depends on cysteine 185, which acts as the Proton donor/acceptor. Threonine 186–histidine 187 is a substrate binding site.

It belongs to the aspartate/glutamate racemases family.

It catalyses the reaction L-glutamate = D-glutamate. The protein operates within cell wall biogenesis; peptidoglycan biosynthesis. Provides the (R)-glutamate required for cell wall biosynthesis. The polypeptide is Glutamate racemase 3 (Caldanaerobacter subterraneus subsp. tengcongensis (strain DSM 15242 / JCM 11007 / NBRC 100824 / MB4) (Thermoanaerobacter tengcongensis)).